The primary structure comprises 569 residues: Mitogen-activated protein kinase 7 (569 aa).

Residues Tyr-13–Phe-304 enclose the Protein kinase domain. ATP is bound by residues Val-19–Val-27 and Lys-42. Asp-139 (proton acceptor) is an active-site residue. Residue Thr-175 is modified to Phosphothreonine. The short motif at Thr-175–Tyr-177 is the TXY element. Tyr-177 carries the phosphotyrosine modification. The segment at Thr-401 to Val-420 is disordered.

Belongs to the protein kinase superfamily. CMGC Ser/Thr protein kinase family. MAP kinase subfamily. In terms of processing, dually phosphorylated on Thr-175 and Tyr-177, which activates the enzyme.

The enzyme catalyses L-seryl-[protein] + ATP = O-phospho-L-seryl-[protein] + ADP + H(+). The catalysed reaction is L-threonyl-[protein] + ATP = O-phospho-L-threonyl-[protein] + ADP + H(+). Its activity is regulated as follows. Activated by threonine and tyrosine phosphorylation. In Oryza sativa subsp. japonica (Rice), this protein is Mitogen-activated protein kinase 7 (MPK7).